The primary structure comprises 548 residues: C-type lectin domain family 4 member F (548 aa).

The Cytoplasmic segment spans residues 1–42 (MKEAELNRDMARYCTDNQCVSLQPQGLGPKSAALMAPRTLRH). Residues 43–69 (VQVILALMVVTVIFSLLALFVVASQPW) form a helical; Signal-anchor for type II membrane protein membrane-spanning segment. Topologically, residues 70-548 (RPEWNKEPPS…STGWSAARVG (479 aa)) are extracellular. N-linked (GlcNAc...) asparagine glycosylation is found at N86, N92, N115, N132, N209, and N255. The C-type lectin domain maps to 438–538 (KFCTSQGAHL…GSSYPWVCKK (101 aa)). 2 disulfides stabilise this stretch: C440–C536 and C516–C528.

Kupffer cells.

It localises to the membrane. Functionally, receptor with an affinity for galactose and fucose. Could be involved in endocytosis. The protein is C-type lectin domain family 4 member F (Clec4f) of Mus musculus (Mouse).